Consider the following 302-residue polypeptide: Oxygen-dependent coproporphyrinogen-III oxidase (302 aa).

S94 lines the substrate pocket. A divalent metal cation contacts are provided by H98 and H108. The active-site Proton donor is H108. Residue 110-112 (NVR) participates in substrate binding. Positions 147 and 177 each coordinate a divalent metal cation. Positions 242–277 (YVEFNLVYDRGTLFGLQTGGRTESILMSMPPLVRWQ) are important for dimerization. 260–262 (GGR) provides a ligand contact to substrate.

Belongs to the aerobic coproporphyrinogen-III oxidase family. In terms of assembly, homodimer. A divalent metal cation serves as cofactor.

Its subcellular location is the cytoplasm. The catalysed reaction is coproporphyrinogen III + O2 + 2 H(+) = protoporphyrinogen IX + 2 CO2 + 2 H2O. It functions in the pathway porphyrin-containing compound metabolism; protoporphyrin-IX biosynthesis; protoporphyrinogen-IX from coproporphyrinogen-III (O2 route): step 1/1. Its function is as follows. Involved in the heme biosynthesis. Catalyzes the aerobic oxidative decarboxylation of propionate groups of rings A and B of coproporphyrinogen-III to yield the vinyl groups in protoporphyrinogen-IX. The chain is Oxygen-dependent coproporphyrinogen-III oxidase from Shewanella putrefaciens (strain CN-32 / ATCC BAA-453).